The following is a 227-amino-acid chain: Ribosomal RNA large subunit methyltransferase E (227 aa).

Positions 78, 80, 103, 119, and 143 each coordinate S-adenosyl-L-methionine. The Proton acceptor role is filled by lysine 183.

It belongs to the class I-like SAM-binding methyltransferase superfamily. RNA methyltransferase RlmE family.

It localises to the cytoplasm. The enzyme catalyses uridine(2552) in 23S rRNA + S-adenosyl-L-methionine = 2'-O-methyluridine(2552) in 23S rRNA + S-adenosyl-L-homocysteine + H(+). Specifically methylates the uridine in position 2552 of 23S rRNA at the 2'-O position of the ribose in the fully assembled 50S ribosomal subunit. This chain is Ribosomal RNA large subunit methyltransferase E, found in Rickettsia africae (strain ESF-5).